The primary structure comprises 1010 residues: Outer kinetochore KNL1 complex subunit knl-1 (1010 aa).

Tandem repeats lie at residues 85-88 (MDIS), 109-112 (MDMS), 228-231 (MDTS), 255-258 (MDIT), 278-281 (MDIS), 323-326 (MDIT), 346-349 (MDIS), 402-405 (MDIT), and 428-431 (MDIS). Positions 85 to 431 (MDISESPACT…LQKEDLMDIS (347 aa)) are 9 X 4 AA repeats of M-[D/E]-[I/L/M]-[S/T]. Coiled-coil stretches lie at residues 820 to 915 (RIVE…GLDK) and 956 to 988 (KALR…KFAQ).

As to quaternary structure, component of the KNL1 complex composed of knl-1 and kbp-5. Part of the ten-subunit outer kinetochore KMN network that includes the KNL1, MIS12 and NDC80 complexes. Interacts with the protein phosphatase 1 (PP1) catalytic subunit gsp-1; the interaction is direct. Interacts with the protein phosphatase 1 (PP1) catalytic subunit gsp-2; the interaction is direct. Interacts with the MIS12 complex subunits kbp-1, kbp-2 and mis-12. Interacts with the NDC80 complex components ndc-80 and him-10. Interacts with knl-3. Interacts with kbp-3. Interacts with kbp-4. Interacts with kbp-5.

Its subcellular location is the cytoplasm. The protein resides in the cell cortex. The protein localises to the chromosome. It is found in the centromere. It localises to the kinetochore. Functionally, acts as a component of the outer kinetochore KNL1 complex that serves as a docking point for spindle assembly checkpoint components and mediates microtubule-kinetochore interactions. Kinetochores, consisting of a centromere-associated inner segment and a microtubule-contacting outer segment, play a crucial role in chromosome segregation by mediating the physical connection between centromeric DNA and spindle microtubules. The outer kinetochore is made up of the ten-subunit KMN network, comprising the MIS12, NDC80 and KNL1 complexes, and auxiliary microtubule-associated components; together they connect the outer kinetochore with the inner kinetochore, bind microtubules, and mediate interactions with mitotic checkpoint proteins that delay anaphase until chromosomes are bioriented on the spindle. Binds the protein phosphatase 1 catalytic subunits gsp-1 and gsp-2, which has a role in delaying formation of load-bearing kinetochore-microtubule attachments. Required for the recruitment of spindle-assembly checkpoint components bub-1 and mdf-1/2 to unattached kinetochores. Binds microtubules which plays a role in silencing of the spindle assembly checkpoint, but not the formation of load-bearing microtubule-kinetochore attachments. Has a role in the correct localization of the spindly-like protein spdl-1 and the RZZ complex that is composed of rod-1, czw-1 and zwl-1 to kinetochores. This is Outer kinetochore KNL1 complex subunit knl-1 (knl-1) from Caenorhabditis elegans.